The primary structure comprises 238 residues: 2-C-methyl-D-erythritol 4-phosphate cytidylyltransferase (238 aa).

The protein belongs to the IspD/TarI cytidylyltransferase family. IspD subfamily.

The enzyme catalyses 2-C-methyl-D-erythritol 4-phosphate + CTP + H(+) = 4-CDP-2-C-methyl-D-erythritol + diphosphate. It functions in the pathway isoprenoid biosynthesis; isopentenyl diphosphate biosynthesis via DXP pathway; isopentenyl diphosphate from 1-deoxy-D-xylulose 5-phosphate: step 2/6. Functionally, catalyzes the formation of 4-diphosphocytidyl-2-C-methyl-D-erythritol from CTP and 2-C-methyl-D-erythritol 4-phosphate (MEP). The sequence is that of 2-C-methyl-D-erythritol 4-phosphate cytidylyltransferase from Leptospira interrogans serogroup Icterohaemorrhagiae serovar copenhageni (strain Fiocruz L1-130).